The sequence spans 395 residues: Thyroid hormone receptor beta (395 aa).

Residues 1-31 (MSEQADKCNSRWKDEAMQNGYIPSYLDKDEL) form a modulating region. A DNA-binding region (nuclear receptor) is located at residues 29-106 (DELCVVCGDK…VGMATDLVLD (78 aa)). Residues cysteine 32, cysteine 35, cysteine 49, cysteine 52, cysteine 70, cysteine 76, cysteine 86, and cysteine 89 each coordinate Zn(2+). NR C4-type zinc fingers lie at residues 32–52 (CVVC…CEGC) and 70–89 (CKYE…CQEC). An NR LBD domain is found at 142–395 (EEWEMIRVVT…PPLFLEVFED (254 aa)). Residues arginine 216, asparagine 265, and histidine 369 each coordinate 3,3',5-triiodo-L-thyronine.

Belongs to the nuclear hormone receptor family. NR1 subfamily. As to quaternary structure, interacts (via the ligand-binding domain) with ncoa2. In terms of tissue distribution, widely expressed in a range of adult tissues including the brain, eye, fin, gill, intestine, liver, swim bladder and ovary. In the eye, expressed in the outer nuclear layer of the retina.

The protein localises to the nucleus. Functionally, nuclear hormone receptor that can act as a repressor or activator of transcription. High affinity receptor for the thyroid gland hormone triiodothyronine (T3). Transactivating activity is ligand-dependent, and is repressed in the absence of T3. This is Thyroid hormone receptor beta (thrb) from Danio rerio (Zebrafish).